A 130-amino-acid polypeptide reads, in one-letter code: Small ribosomal subunit protein uS11 (130 aa).

The protein belongs to the universal ribosomal protein uS11 family. In terms of assembly, part of the 30S ribosomal subunit. Interacts with proteins S7 and S18. Binds to IF-3.

Functionally, located on the platform of the 30S subunit, it bridges several disparate RNA helices of the 16S rRNA. Forms part of the Shine-Dalgarno cleft in the 70S ribosome. This Shewanella baltica (strain OS223) protein is Small ribosomal subunit protein uS11.